Here is a 337-residue protein sequence, read N- to C-terminus: Exopolysaccharide phosphotransferase cps2G (337 aa).

The protein belongs to the stealth family.

The sequence is that of Exopolysaccharide phosphotransferase cps2G (cps2G) from Lactiplantibacillus plantarum (strain ATCC BAA-793 / NCIMB 8826 / WCFS1) (Lactobacillus plantarum).